A 379-amino-acid polypeptide reads, in one-letter code: Cytochrome b (379 aa).

The next 4 helical transmembrane spans lie at 33-53, 77-98, 113-133, and 178-198; these read FGSL…FLAM, WLIR…YLHI, WNIG…GYVL, and FFAF…LHLL. Heme b-binding residues include histidine 83 and histidine 97. Residues histidine 182 and histidine 196 each coordinate heme b. Histidine 201 is an a ubiquinone binding site. 4 helical membrane passes run 226 to 246, 288 to 308, 320 to 340, and 347 to 367; these read YKDL…ALFY, LGGV…PILH, ASQL…WIGG, and YIII…VLNP.

Belongs to the cytochrome b family. In terms of assembly, the cytochrome bc1 complex contains 3 respiratory subunits (MT-CYB, CYC1 and UQCRFS1), 2 core proteins (UQCRC1 and UQCRC2) and probably 6 low-molecular weight proteins. Heme b serves as cofactor.

It localises to the mitochondrion inner membrane. In terms of biological role, component of the ubiquinol-cytochrome c reductase complex (complex III or cytochrome b-c1 complex) that is part of the mitochondrial respiratory chain. The b-c1 complex mediates electron transfer from ubiquinol to cytochrome c. Contributes to the generation of a proton gradient across the mitochondrial membrane that is then used for ATP synthesis. This chain is Cytochrome b (mt-cyb), found in Anguilla anguilla (European freshwater eel).